The chain runs to 438 residues: Putative phospholipase A2 (438 aa).

The Nucleophile role is filled by S257. Catalysis depends on charge relay system residues D291 and H368.

This sequence belongs to the serine esterase family.

It localises to the cytoplasm. It is found in the nucleus. The catalysed reaction is a 1-O-alkyl-2-acetyl-sn-glycero-3-phosphocholine + H2O = a 1-O-alkyl-sn-glycero-3-phosphocholine + acetate + H(+). The sequence is that of Putative phospholipase A2 from Schizosaccharomyces pombe (strain 972 / ATCC 24843) (Fission yeast).